The sequence spans 348 residues: RNA 3'-terminal phosphate cyclase (348 aa).

Residues Gln-101 and 286 to 289 (HMAD) contribute to the ATP site. The active-site Tele-AMP-histidine intermediate is His-312.

It belongs to the RNA 3'-terminal cyclase family. Type 1 subfamily.

Its subcellular location is the cytoplasm. The enzyme catalyses a 3'-end 3'-phospho-ribonucleotide-RNA + ATP = a 3'-end 2',3'-cyclophospho-ribonucleotide-RNA + AMP + diphosphate. Its function is as follows. Catalyzes the conversion of 3'-phosphate to a 2',3'-cyclic phosphodiester at the end of RNA. The mechanism of action of the enzyme occurs in 3 steps: (A) adenylation of the enzyme by ATP; (B) transfer of adenylate to an RNA-N3'P to produce RNA-N3'PP5'A; (C) and attack of the adjacent 2'-hydroxyl on the 3'-phosphorus in the diester linkage to produce the cyclic end product. The biological role of this enzyme is unknown but it is likely to function in some aspects of cellular RNA processing. The chain is RNA 3'-terminal phosphate cyclase from Pyrobaculum aerophilum (strain ATCC 51768 / DSM 7523 / JCM 9630 / CIP 104966 / NBRC 100827 / IM2).